The sequence spans 250 residues: Pyrroloquinoline-quinone synthase (250 aa).

This sequence belongs to the PqqC family.

It carries out the reaction 6-(2-amino-2-carboxyethyl)-7,8-dioxo-1,2,3,4,7,8-hexahydroquinoline-2,4-dicarboxylate + 3 O2 = pyrroloquinoline quinone + 2 H2O2 + 2 H2O + H(+). Its pathway is cofactor biosynthesis; pyrroloquinoline quinone biosynthesis. Functionally, ring cyclization and eight-electron oxidation of 3a-(2-amino-2-carboxyethyl)-4,5-dioxo-4,5,6,7,8,9-hexahydroquinoline-7,9-dicarboxylic-acid to PQQ. The sequence is that of Pyrroloquinoline-quinone synthase from Xanthomonas oryzae pv. oryzae (strain MAFF 311018).